We begin with the raw amino-acid sequence, 65 residues long: Large ribosomal subunit protein bL35 (65 aa).

Residues 1 to 11 (MPKIKTRRSAA) are compositionally biased toward basic residues. The tract at residues 1-25 (MPKIKTRRSAAKRFSVTGSGKFRRR) is disordered.

The protein belongs to the bacterial ribosomal protein bL35 family.

The polypeptide is Large ribosomal subunit protein bL35 (Nitratidesulfovibrio vulgaris (strain ATCC 29579 / DSM 644 / CCUG 34227 / NCIMB 8303 / VKM B-1760 / Hildenborough) (Desulfovibrio vulgaris)).